The primary structure comprises 273 residues: UPF0380 protein YafZ (273 aa).

This sequence belongs to the UPF0380 family.

This chain is UPF0380 protein YafZ (yafZ), found in Escherichia coli (strain K12).